The following is a 562-amino-acid chain: MLTKLRISKLVSYTLPRRIFQRRFLVTNNTAEESPIVAAESPELPSWIKDFLSNKPSSSSSSVSKDDEDFVIPSLANWVESQKFSRQQVSEGNVVKKPVEDIDKVCDFLNKKDTSHEDVVKELSKCDVVVTESLVLQVLRRFSNGWNQAYGFFIWANSQTGYVHSGHTYNAMVDVLGKCRNFDLMWELVNEMNKNEESKLVTLDTMSKVMRRLAKSGKYNKAVDAFLEMEKSYGVKTDTIAMNSLMDALVKENSIEHAHEVFLKLFDTIKPDARTFNILIHGFCKARKFDDARAMMDLMKVTEFTPDVVTYTSFVEAYCKEGDFRRVNEMLEEMRENGCNPNVVTYTIVMHSLGKSKQVAEALGVYEKMKEDGCVPDAKFYSSLIHILSKTGRFKDAAEIFEDMTNQGVRRDVLVYNTMISAALHHSRDEMALRLLKRMEDEEGESCSPNVETYAPLLKMCCHKKKMKLLGILLHHMVKNDVSIDVSTYILLIRGLCMSGKVEEACLFFEEAVRKGMVPRDSTCKMLVDELEKKNMAEAKLKIQSLVQSKTMIDSHSPLSVS.

Residues methionine 1 to alanine 31 constitute a mitochondrion transit peptide. 10 PPR repeats span residues serine 165–lysine 199, threonine 202–serine 232, aspartate 238–threonine 268, aspartate 272–proline 306, aspartate 307–proline 341, asparagine 342–proline 376, aspartate 377–arginine 411, aspartate 412–serine 446, asparagine 450–isoleucine 484, and aspartate 485–proline 519.

The protein belongs to the PPR family. P subfamily.

Its subcellular location is the mitochondrion. This Arabidopsis thaliana (Mouse-ear cress) protein is Pentatricopeptide repeat-containing protein At3g22670, mitochondrial.